A 335-amino-acid chain; its full sequence is N-acetyl-gamma-glutamyl-phosphate reductase (335 aa).

The active site involves Cys-155.

It belongs to the NAGSA dehydrogenase family. Type 1 subfamily.

The protein localises to the cytoplasm. It catalyses the reaction N-acetyl-L-glutamate 5-semialdehyde + phosphate + NADP(+) = N-acetyl-L-glutamyl 5-phosphate + NADPH + H(+). It functions in the pathway amino-acid biosynthesis; L-arginine biosynthesis; N(2)-acetyl-L-ornithine from L-glutamate: step 3/4. Its function is as follows. Catalyzes the NADPH-dependent reduction of N-acetyl-5-glutamyl phosphate to yield N-acetyl-L-glutamate 5-semialdehyde. The sequence is that of N-acetyl-gamma-glutamyl-phosphate reductase from Pasteurella multocida (strain Pm70).